Reading from the N-terminus, the 702-residue chain is Elongation factor G (702 aa).

A tr-type G domain is found at 8–290 (SRYRNIGISA…AVIEYLPSPT (283 aa)). Residues 17-24 (AHIDAGKT), 88-92 (DTPGH), and 142-145 (NKMD) contribute to the GTP site.

The protein belongs to the TRAFAC class translation factor GTPase superfamily. Classic translation factor GTPase family. EF-G/EF-2 subfamily.

The protein resides in the cytoplasm. Catalyzes the GTP-dependent ribosomal translocation step during translation elongation. During this step, the ribosome changes from the pre-translocational (PRE) to the post-translocational (POST) state as the newly formed A-site-bound peptidyl-tRNA and P-site-bound deacylated tRNA move to the P and E sites, respectively. Catalyzes the coordinated movement of the two tRNA molecules, the mRNA and conformational changes in the ribosome. This Edwardsiella ictaluri (strain 93-146) protein is Elongation factor G.